Reading from the N-terminus, the 388-residue chain is Chorismate synthase (388 aa).

Arg-39 and Arg-45 together coordinate NADP(+). FMN is bound by residues 130-132 (RSS), 251-252 (NA), Gly-296, 311-315 (KPIPT), and Arg-337.

The protein belongs to the chorismate synthase family. As to quaternary structure, homotetramer. It depends on FMNH2 as a cofactor.

It carries out the reaction 5-O-(1-carboxyvinyl)-3-phosphoshikimate = chorismate + phosphate. It participates in metabolic intermediate biosynthesis; chorismate biosynthesis; chorismate from D-erythrose 4-phosphate and phosphoenolpyruvate: step 7/7. Its function is as follows. Catalyzes the anti-1,4-elimination of the C-3 phosphate and the C-6 proR hydrogen from 5-enolpyruvylshikimate-3-phosphate (EPSP) to yield chorismate, which is the branch point compound that serves as the starting substrate for the three terminal pathways of aromatic amino acid biosynthesis. This reaction introduces a second double bond into the aromatic ring system. In Streptococcus pneumoniae (strain 70585), this protein is Chorismate synthase.